The chain runs to 225 residues: Histone H1 (225 aa).

Positions 1–20 (MGPKATSGTRGRGKKVGTKT) are disordered. Positions 23–94 (PLPKYKDLIV…GPAGSIKLLK (72 aa)) constitute an H15 domain. Residues 95 to 147 (KAAQPKPEEAKRAAKPAKRVVKAAKPAKAKPAKAAKAAKPAKPVKAAKAASAV) are disordered. Residues 107-127 (AAKPAKRVVKAAKPAKAKPAK) are compositionally biased toward basic residues. The span at 128–147 (AAKAAKPAKPVKAAKAASAV) shows a compositional bias: low complexity.

This sequence belongs to the histone H1/H5 family.

It is found in the nucleus. It localises to the chromosome. Its function is as follows. Could act as an H1-type linker histone. In Eremothecium gossypii (strain ATCC 10895 / CBS 109.51 / FGSC 9923 / NRRL Y-1056) (Yeast), this protein is Histone H1 (HHOA).